The sequence spans 257 residues: Phosphate import ATP-binding protein PstB (257 aa).

Residues 4–252 enclose the ABC transporter domain; sequence LKLNDVNIYY…PDNKETEDYI (249 aa). An ATP-binding site is contributed by 36–43; it reads GPSGCGKS.

It belongs to the ABC transporter superfamily. Phosphate importer (TC 3.A.1.7) family. As to quaternary structure, the complex is composed of two ATP-binding proteins (PstB), two transmembrane proteins (PstC and PstA) and a solute-binding protein (PstS).

It localises to the cell membrane. The catalysed reaction is phosphate(out) + ATP + H2O = ADP + 2 phosphate(in) + H(+). Its function is as follows. Part of the ABC transporter complex PstSACB involved in phosphate import. Responsible for energy coupling to the transport system. The sequence is that of Phosphate import ATP-binding protein PstB from Corynebacterium efficiens (strain DSM 44549 / YS-314 / AJ 12310 / JCM 11189 / NBRC 100395).